A 292-amino-acid chain; its full sequence is Poly(U)-specific endoribonuclease-B (292 aa).

The region spanning 8 to 285 (VNHELSKLFN…IGTAYPALLS (278 aa)) is the EndoU domain. Catalysis depends on residues His-162, His-178, and Lys-224.

Belongs to the ENDOU family. In terms of assembly, monomer. Mn(2+) is required as a cofactor.

Its subcellular location is the nucleus. The catalysed reaction is uridylyl-uridylyl-ribonucleotide-RNA = a 3'-end uridylyl-2',3'-cyclophospho-uridine-RNA + a 5'-end dephospho-ribonucleoside-RNA. In terms of biological role, poly(U)-specific endoribonuclease involved in the processing of intron-encoded box C/D snoRNAs, such as U16 and U86. Releases products that have 2',3'-cyclic phosphate termini at the 3'-end. The polypeptide is Poly(U)-specific endoribonuclease-B (endou-b) (Xenopus laevis (African clawed frog)).